The primary structure comprises 32 residues: Photosystem II reaction center protein T (32 aa).

The helical transmembrane segment at 3–23 (ALVYVFLLIGTLMIIFFAIFF) threads the bilayer.

Belongs to the PsbT family. As to quaternary structure, PSII is composed of 1 copy each of membrane proteins PsbA, PsbB, PsbC, PsbD, PsbE, PsbF, PsbH, PsbI, PsbJ, PsbK, PsbL, PsbM, PsbT, PsbY, PsbZ, Psb30/Ycf12, at least 3 peripheral proteins of the oxygen-evolving complex and a large number of cofactors. It forms dimeric complexes.

It localises to the plastid. The protein localises to the chloroplast thylakoid membrane. Found at the monomer-monomer interface of the photosystem II (PS II) dimer, plays a role in assembly and dimerization of PSII. PSII is a light-driven water plastoquinone oxidoreductase, using light energy to abstract electrons from H(2)O, generating a proton gradient subsequently used for ATP formation. This chain is Photosystem II reaction center protein T, found in Cyanidioschyzon merolae (strain NIES-3377 / 10D) (Unicellular red alga).